Reading from the N-terminus, the 141-residue chain is Putative pre-16S rRNA nuclease (141 aa).

Belongs to the YqgF nuclease family.

The protein resides in the cytoplasm. In terms of biological role, could be a nuclease involved in processing of the 5'-end of pre-16S rRNA. The polypeptide is Putative pre-16S rRNA nuclease (Cupriavidus pinatubonensis (strain JMP 134 / LMG 1197) (Cupriavidus necator (strain JMP 134))).